We begin with the raw amino-acid sequence, 1104 residues long: Extended synaptotagmin-1 (1104 aa).

The residue at position 1 (M1) is an N-acetylmethionine. The Cytoplasmic segment spans residues M1–S38. The segment at M1–A48 is disordered. Positions G37 to A47 are enriched in gly residues. Residues G39 to G59 form a helical membrane-spanning segment. The Lumenal segment spans residues R60–L62. A helical membrane pass occupies residues L63–F83. At G84 to S1104 the chain is on the cytoplasmic side. The stretch at W91–T116 forms a coiled coil. Positions D135 to V313 constitute an SMP-LTD domain. C2 domains are found at residues L312–F433, Q460–S580, S627–L751, and L777–S899. S324 is modified (phosphoserine; by CDK5). Ca(2+) is bound by residues K344, D345, D357, D404, D406, D408, D410, and D411. A disordered region spans residues V617 to S641. Residue K817 is modified to N6-acetyllysine. Residues S820 and S941 each carry the phosphoserine modification. The disordered stretch occupies residues S924–S950. The span at H925–H946 shows a compositional bias: low complexity. The residue at position 948 (T948) is a Phosphothreonine. Phosphoserine occurs at positions 949 and 963. The C2 5 domain occupies P971–Y1093. Y1009 carries the post-translational modification Phosphotyrosine. A required for phosphatidylinositol 4,5-bisphosphate-dependent location at the cell membrane region spans residues K1018–R1025. At S1034 the chain carries Phosphoserine.

Belongs to the extended synaptotagmin family. Interacts with ESYT2 and ESYT3. Interacts with ADGRD1; inhibiting the G-protein-coupled receptor activity of ADGRD1. Interaction with ADGRD1 is abolished when cytosolic calcium increases, relieving ADGRD1 G-protein-coupled receptor activity. Interacts (phosphorylated form) with SLC2A4. In terms of processing, phosphorylated on Ser residues in insulin-treated adipocytes (in vitro); this promotes interaction with SLC2A4. In terms of tissue distribution, widely expressed.

It is found in the endoplasmic reticulum membrane. It localises to the cell membrane. Its function is as follows. Binds calcium (via the C2 domains) and translocates to sites of contact between the endoplasmic reticulum and the cell membrane in response to increased cytosolic calcium levels. Helps tether the endoplasmic reticulum to the cell membrane and promotes the formation of appositions between the endoplasmic reticulum and the cell membrane. Acts as an inhibitor of ADGRD1 G-protein-coupled receptor activity in absence of cytosolic calcium. Binds glycerophospholipids in a barrel-like domain and may play a role in cellular lipid transport. The sequence is that of Extended synaptotagmin-1 from Homo sapiens (Human).